A 908-amino-acid chain; its full sequence is Protein translocase subunit SecA (908 aa).

ATP contacts are provided by residues Gln-87, 105 to 109 (GEGKT), and Asp-512. The interval 866-908 (GSDEDDAIAAHTPMIRDGDKVGRNDPCPCGSGRKYKQCHGKLS) is disordered. Positions 879–888 (MIRDGDKVGR) are enriched in basic and acidic residues. The Zn(2+) site is built by Cys-892, Cys-894, Cys-903, and His-904. Over residues 898–908 (RKYKQCHGKLS) the composition is skewed to basic residues.

Belongs to the SecA family. In terms of assembly, monomer and homodimer. Part of the essential Sec protein translocation apparatus which comprises SecA, SecYEG and auxiliary proteins SecDF-YajC and YidC. It depends on Zn(2+) as a cofactor.

Its subcellular location is the cell inner membrane. The protein localises to the cytoplasm. It catalyses the reaction ATP + H2O + cellular proteinSide 1 = ADP + phosphate + cellular proteinSide 2.. In terms of biological role, part of the Sec protein translocase complex. Interacts with the SecYEG preprotein conducting channel. Has a central role in coupling the hydrolysis of ATP to the transfer of proteins into and across the cell membrane, serving both as a receptor for the preprotein-SecB complex and as an ATP-driven molecular motor driving the stepwise translocation of polypeptide chains across the membrane. The chain is Protein translocase subunit SecA from Shewanella oneidensis (strain ATCC 700550 / JCM 31522 / CIP 106686 / LMG 19005 / NCIMB 14063 / MR-1).